A 304-amino-acid polypeptide reads, in one-letter code: tRNA pseudouridine synthase A (304 aa).

The active-site Nucleophile is D65. Y123 is a binding site for substrate. The disordered stretch occupies residues 274–304 (HTGQEKPEARLGNGDLESREERPPHEMSPLH). The span at 289–298 (LESREERPPH) shows a compositional bias: basic and acidic residues.

The protein belongs to the tRNA pseudouridine synthase TruA family. In terms of assembly, homodimer.

The catalysed reaction is uridine(38/39/40) in tRNA = pseudouridine(38/39/40) in tRNA. Its function is as follows. Formation of pseudouridine at positions 38, 39 and 40 in the anticodon stem and loop of transfer RNAs. In Gloeobacter violaceus (strain ATCC 29082 / PCC 7421), this protein is tRNA pseudouridine synthase A.